A 365-amino-acid chain; its full sequence is Aminomethyltransferase (365 aa).

It belongs to the GcvT family. The glycine cleavage system is composed of four proteins: P, T, L and H.

The enzyme catalyses N(6)-[(R)-S(8)-aminomethyldihydrolipoyl]-L-lysyl-[protein] + (6S)-5,6,7,8-tetrahydrofolate = N(6)-[(R)-dihydrolipoyl]-L-lysyl-[protein] + (6R)-5,10-methylene-5,6,7,8-tetrahydrofolate + NH4(+). Functionally, the glycine cleavage system catalyzes the degradation of glycine. The chain is Aminomethyltransferase from Bacillus pumilus (strain SAFR-032).